A 380-amino-acid polypeptide reads, in one-letter code: uncharacterized protein (380 aa).

2 HTH tetR-type domains span residues 3 to 63 and 201 to 262; these read ESAE…KEGL and VRTR…CAEI. A DNA-binding region (H-T-H motif) is located at residues 225-244; sequence TISDITRKSNIRRATFYDHY.

This is an uncharacterized protein from Bacillus subtilis (strain 168).